The primary structure comprises 603 residues: Linalool synthase Tps-5031L19, chloroplastic (603 aa).

The transit peptide at Met1–Ser36 directs the protein to the chloroplast. Positions 322, 359, 363, 500, and 503 each coordinate (2E)-geranyl diphosphate. Positions 359 and 363 each coordinate Mg(2+). Positions Asp359–Asp363 match the DDXXD motif motif. Mg(2+)-binding residues include Asp503, Thr507, and Glu511.

Belongs to the terpene synthase family. Tpsb subfamily. As to quaternary structure, monomer. Mg(2+) is required as a cofactor. The cofactor is Mn(2+).

The protein localises to the plastid. It is found in the chloroplast. The catalysed reaction is (2E)-geranyl diphosphate + H2O = linalool + diphosphate. It functions in the pathway secondary metabolite biosynthesis; terpenoid biosynthesis. In terms of biological role, monoterpene synthase (mono-TPS) involved in the biosynthesis of monoterpenes natural products. Catalyzes the conversion of (2E)-geranyl diphosphate (GPP) into linalool. This is Linalool synthase Tps-5031L19, chloroplastic from Perilla frutescens var. hirtella (Perilla citriodora).